A 311-amino-acid chain; its full sequence is Glycosyltransferase 6 domain-containing protein 1 (311 aa).

At 1 to 5 (MKAKG) the chain is on the cytoplasmic side. The helical; Signal-anchor for type II membrane protein transmembrane segment at 6 to 26 (RILLLTSCLFLLLLLLAKIHL) threads the bilayer. Residues 27-311 (RNHQEEELPL…KVAHYPTDDL (285 aa)) lie on the Lumenal side of the membrane. Asn-77 carries an N-linked (GlcNAc...) asparagine glycan. Residues 85 to 90 (FAVSSF), 176 to 178 (SVN), and 198 to 201 (HAWW) contribute to the substrate site. The active-site Nucleophile is the Glu-266.

Belongs to the glycosyltransferase 6 family. It depends on Mn(2+) as a cofactor.

Its subcellular location is the membrane. This Rattus norvegicus (Rat) protein is Glycosyltransferase 6 domain-containing protein 1 (Glt6d1).